We begin with the raw amino-acid sequence, 153 residues long: 3-hydroxyacyl-[acyl-carrier-protein] dehydratase FabZ (153 aa).

The active site involves His59.

This sequence belongs to the thioester dehydratase family. FabZ subfamily.

The protein localises to the cytoplasm. The catalysed reaction is a (3R)-hydroxyacyl-[ACP] = a (2E)-enoyl-[ACP] + H2O. Involved in unsaturated fatty acids biosynthesis. Catalyzes the dehydration of short chain beta-hydroxyacyl-ACPs and long chain saturated and unsaturated beta-hydroxyacyl-ACPs. The chain is 3-hydroxyacyl-[acyl-carrier-protein] dehydratase FabZ from Thermosynechococcus vestitus (strain NIES-2133 / IAM M-273 / BP-1).